Here is a 101-residue protein sequence, read N- to C-terminus: Protein Tat (101 aa).

Residues 1 to 12 (MDPVDPRLEPWK) show a composition bias toward basic and acidic residues. Positions 1-20 (MDPVDPRLEPWKHPGSQPKA) are disordered. The interval 1–24 (MDPVDPRLEPWKHPGSQPKAACTS) is interaction with human CREBBP. The tract at residues 1–48 (MDPVDPRLEPWKHPGSQPKAACTSCYCKKCCFHCQVCFTTKGLGISYG) is transactivation. Cysteine 22, cysteine 25, and cysteine 27 together coordinate Zn(2+). The segment at 22-37 (CTSCYCKKCCFHCQVC) is cysteine-rich. Lysine 28 carries the N6-acetyllysine; by host PCAF modification. Cysteine 30, histidine 33, cysteine 34, and cysteine 37 together coordinate Zn(2+). Residues 38–48 (FTTKGLGISYG) are core. Residues 48–57 (GRKKRRQRRR) are compositionally biased toward basic residues. A disordered region spans residues 48-101 (GRKKRRQRRRAPQDSQTHQVSLPKQPASQARGDPTGPKESKKKVERETETDPVD). The short motif at 49 to 57 (RKKRRQRRR) is the Nuclear localization signal, RNA-binding (TAR), and protein transduction element. The interval 49 to 86 (RKKRRQRRRAPQDSQTHQVSLPKQPASQARGDPTGPKE) is interaction with the host capping enzyme RNGTT. An N6-acetyllysine; by host EP300 and GCN5L2 mark is found at lysine 50 and lysine 51. Arginine 52 and arginine 53 each carry asymmetric dimethylarginine; by host PRMT6. Residues 60–75 (QDSQTHQVSLPKQPAS) show a composition bias toward polar residues. Lysine 71 is covalently cross-linked (Glycyl lysine isopeptide (Lys-Gly) (interchain with G-Cter in ubiquitin)). The Cell attachment site signature appears at 78–80 (RGD). Residues 83 to 101 (GPKESKKKVERETETDPVD) show a composition bias toward basic and acidic residues.

It belongs to the lentiviruses Tat family. In terms of assembly, interacts with host CCNT1. Associates with the P-TEFb complex composed at least of Tat, P-TEFb (CDK9 and CCNT1), TAR RNA, RNA Pol II. Recruits the HATs CREBBP, TAF1/TFIID, EP300, PCAF and GCN5L2. Interacts with host KAT5/Tip60; this interaction targets the latter to degradation. Interacts with the host deacetylase SIRT1. Interacts with host capping enzyme RNGTT; this interaction stimulates RNGTT. Binds to host KDR, and to the host integrins ITGAV/ITGB3 and ITGA5/ITGB1. Interacts with host KPNB1/importin beta-1 without previous binding to KPNA1/importin alpha-1. Interacts with EIF2AK2. Interacts with host nucleosome assembly protein NAP1L1; this interaction may be required for the transport of Tat within the nucleus, since the two proteins interact at the nuclear rim. Interacts with host C1QBP/SF2P32; this interaction involves lysine-acetylated Tat. Interacts with the host chemokine receptors CCR2, CCR3 and CXCR4. Interacts with host DPP4/CD26; this interaction may trigger an anti-proliferative effect. Interacts with host LDLR. Interacts with the host extracellular matrix metalloproteinase MMP1. Interacts with host PRMT6; this interaction mediates Tat's methylation. Interacts with, and is ubiquitinated by MDM2/Hdm2. Interacts with host PSMC3 and HTATIP2. Interacts with STAB1; this interaction may overcome SATB1-mediated repression of IL2 and IL2RA (interleukin) in T cells by binding to the same domain than HDAC1. Interacts (when acetylated) with human CDK13, thereby increasing HIV-1 mRNA splicing and promoting the production of the doubly spliced HIV-1 protein Nef. Interacts with host TBP; this interaction modulates the activity of transcriptional pre-initiation complex. Interacts with host RELA. Interacts with host PLSCR1; this interaction negatively regulates Tat transactivation activity by altering its subcellular distribution. In terms of processing, asymmetrical arginine methylation by host PRMT6 seems to diminish the transactivation capacity of Tat and affects the interaction with host CCNT1. Post-translationally, acetylation by EP300, CREBBP, GCN5L2/GCN5 and PCAF regulates the transactivation activity of Tat. EP300-mediated acetylation of Lys-50 promotes dissociation of Tat from the TAR RNA through the competitive binding to PCAF's bromodomain. In addition, the non-acetylated Tat's N-terminus can also interact with PCAF. PCAF-mediated acetylation of Lys-28 enhances Tat's binding to CCNT1. Lys-50 is deacetylated by SIRT1. Polyubiquitination by host MDM2 does not target Tat to degradation, but activates its transactivation function and fosters interaction with CCNT1 and TAR RNA. In terms of processing, phosphorylated by EIF2AK2 on serine and threonine residues adjacent to the basic region important for TAR RNA binding and function. Phosphorylation of Tat by EIF2AK2 is dependent on the prior activation of EIF2AK2 by dsRNA.

It is found in the host nucleus. Its subcellular location is the host nucleolus. The protein resides in the host cytoplasm. It localises to the secreted. In terms of biological role, transcriptional activator that increases RNA Pol II processivity, thereby increasing the level of full-length viral transcripts. Recognizes a hairpin structure at the 5'-LTR of the nascent viral mRNAs referred to as the transactivation responsive RNA element (TAR) and recruits the cyclin T1-CDK9 complex (P-TEFb complex) that will in turn hyperphosphorylate the RNA polymerase II to allow efficient elongation. The CDK9 component of P-TEFb and other Tat-activated kinases hyperphosphorylate the C-terminus of RNA Pol II that becomes stabilized and much more processive. Other factors such as HTATSF1/Tat-SF1, SUPT5H/SPT5, and HTATIP2 are also important for Tat's function. Besides its effect on RNA Pol II processivity, Tat induces chromatin remodeling of proviral genes by recruiting the histone acetyltransferases (HATs) CREBBP, EP300 and PCAF to the chromatin. This also contributes to the increase in proviral transcription rate, especially when the provirus integrates in transcriptionally silent region of the host genome. To ensure maximal activation of the LTR, Tat mediates nuclear translocation of NF-kappa-B by interacting with host RELA. Through its interaction with host TBP, Tat may also modulate transcription initiation. Tat can reactivate a latently infected cell by penetrating in it and transactivating its LTR promoter. In the cytoplasm, Tat is thought to act as a translational activator of HIV-1 mRNAs. Functionally, extracellular circulating Tat can be endocytosed by surrounding uninfected cells via the binding to several surface receptors such as CD26, CXCR4, heparan sulfate proteoglycans (HSPG) or LDLR. Neurons are rarely infected, but they internalize Tat via their LDLR. Through its interaction with nuclear HATs, Tat is potentially able to control the acetylation-dependent cellular gene expression. Modulates the expression of many cellular genes involved in cell survival, proliferation or in coding for cytokines or cytokine receptors. Tat plays a role in T-cell and neurons apoptosis. Tat induced neurotoxicity and apoptosis probably contribute to neuroAIDS. Circulating Tat also acts as a chemokine-like and/or growth factor-like molecule that binds to specific receptors on the surface of the cells, affecting many cellular pathways. In the vascular system, Tat binds to ITGAV/ITGB3 and ITGA5/ITGB1 integrins dimers at the surface of endothelial cells and competes with bFGF for heparin-binding sites, leading to an excess of soluble bFGF. The protein is Protein Tat of Homo sapiens (Human).